Consider the following 162-residue polypeptide: Cyclic pyranopterin monophosphate synthase (162 aa).

Substrate contacts are provided by residues 75–77 and 113–114; these read LCH and ME. The active site involves Asp128.

Belongs to the MoaC family. Homohexamer; trimer of dimers.

It catalyses the reaction (8S)-3',8-cyclo-7,8-dihydroguanosine 5'-triphosphate = cyclic pyranopterin phosphate + diphosphate. It participates in cofactor biosynthesis; molybdopterin biosynthesis. Catalyzes the conversion of (8S)-3',8-cyclo-7,8-dihydroguanosine 5'-triphosphate to cyclic pyranopterin monophosphate (cPMP). The polypeptide is Cyclic pyranopterin monophosphate synthase (Burkholderia orbicola (strain MC0-3)).